A 277-amino-acid polypeptide reads, in one-letter code: Undecaprenyl-diphosphatase (277 aa).

A run of 5 helical transmembrane segments spans residues 85–105 (VNIV…AGAI), 109–129 (LFAP…ILWV), 188–208 (ATEF…VYSV), 218–238 (ADIP…FLCV), and 256–276 (YRIG…VVWA).

It belongs to the UppP family.

Its subcellular location is the cell inner membrane. The catalysed reaction is di-trans,octa-cis-undecaprenyl diphosphate + H2O = di-trans,octa-cis-undecaprenyl phosphate + phosphate + H(+). Its function is as follows. Catalyzes the dephosphorylation of undecaprenyl diphosphate (UPP). Confers resistance to bacitracin. This Herminiimonas arsenicoxydans protein is Undecaprenyl-diphosphatase.